A 418-amino-acid polypeptide reads, in one-letter code: Alpha-(1-&gt;3)-arabinofuranosyltransferase (418 aa).

The next 11 helical transmembrane spans lie at 25–45, 81–101, 102–122, 125–145, 153–173, 183–203, 210–230, 266–286, 293–312, 327–349, and 372–392; these read NAVAWPLAMLLMAHRFFVLAI, YLYNPGATLLLAPLGYITHFT, LARWMFIAVNLLAIVLAFGLL, LSGWALRSMVWPIAIALAMLT, IFSNINGILLLMLAIFLWCVV, VIGLAILIKPMFLPLLFLPLV, LILGILTPVIFNAVAWFLVPG, MEITWFLIFGAMVGLAVLALL, PYFWAATTTGVLLTGVFFLS, IFTLLGSRSVFHNWVAWVAAYFF, and ATVGWGLLIVVTFVSALIWFI.

It belongs to the glycosyltransferase 87 family.

It localises to the cell membrane. The enzyme catalyses Adds an alpha-D-arabinofuranosyl group from trans,octacis-decaprenylphospho-beta-D-arabinofuranose at the 3-O-position of an alpha-(1-&gt;5)-arabinofuranan chain attached to a beta-(1-&gt;5)-galactofuranan chain.. It functions in the pathway cell wall biogenesis; cell wall polysaccharide biosynthesis. In terms of biological role, involved in the biosynthesis of the arabinogalactan (AG) region of the mycolylarabinogalactan-peptidoglycan (mAGP) complex, an essential component of the corynebacterial cell wall. Catalyzes the addition of an arabinofuranosyl (Araf) residue from the sugar donor beta-D-arabinofuranosyl-1-monophosphoryldecaprenol (DPA) on the C-3 of an alpha-(1-&gt;5)-linked Araf from the arabinan backbone of AG. This is Alpha-(1-&gt;3)-arabinofuranosyltransferase from Corynebacterium glutamicum (strain ATCC 13032 / DSM 20300 / JCM 1318 / BCRC 11384 / CCUG 27702 / LMG 3730 / NBRC 12168 / NCIMB 10025 / NRRL B-2784 / 534).